The chain runs to 62 residues: Large ribosomal subunit protein uL30 (62 aa).

This sequence belongs to the universal ribosomal protein uL30 family. Part of the 50S ribosomal subunit.

This Marinobacter nauticus (strain ATCC 700491 / DSM 11845 / VT8) (Marinobacter aquaeolei) protein is Large ribosomal subunit protein uL30.